The primary structure comprises 161 residues: Protein-export protein SecB (161 aa).

This sequence belongs to the SecB family. In terms of assembly, homotetramer, a dimer of dimers. One homotetramer interacts with 1 SecA dimer.

It is found in the cytoplasm. In terms of biological role, one of the proteins required for the normal export of preproteins out of the cell cytoplasm. It is a molecular chaperone that binds to a subset of precursor proteins, maintaining them in a translocation-competent state. It also specifically binds to its receptor SecA. This chain is Protein-export protein SecB, found in Bradyrhizobium diazoefficiens (strain JCM 10833 / BCRC 13528 / IAM 13628 / NBRC 14792 / USDA 110).